The chain runs to 173 residues: RNA pyrophosphohydrolase (173 aa).

The Nudix hydrolase domain maps to 11 to 164 (PYRKCVGIVV…KKHVYMKVVS (154 aa)). A Nudix box motif is present at residues 52-73 (GGIDEDEKPLDAAYRELYEETG).

This sequence belongs to the Nudix hydrolase family. RppH subfamily. A divalent metal cation serves as cofactor.

Accelerates the degradation of transcripts by removing pyrophosphate from the 5'-end of triphosphorylated RNA, leading to a more labile monophosphorylated state that can stimulate subsequent ribonuclease cleavage. This is RNA pyrophosphohydrolase from Bartonella tribocorum (strain CIP 105476 / IBS 506).